The following is a 345-amino-acid chain: Phosphoribosylformylglycinamidine cyclo-ligase (345 aa).

It belongs to the AIR synthase family.

It localises to the cytoplasm. It catalyses the reaction 2-formamido-N(1)-(5-O-phospho-beta-D-ribosyl)acetamidine + ATP = 5-amino-1-(5-phospho-beta-D-ribosyl)imidazole + ADP + phosphate + H(+). It functions in the pathway purine metabolism; IMP biosynthesis via de novo pathway; 5-amino-1-(5-phospho-D-ribosyl)imidazole from N(2)-formyl-N(1)-(5-phospho-D-ribosyl)glycinamide: step 2/2. The sequence is that of Phosphoribosylformylglycinamidine cyclo-ligase from Salmonella typhimurium (strain LT2 / SGSC1412 / ATCC 700720).